Consider the following 303-residue polypeptide: D-alanine--D-alanine ligase B (303 aa).

The ATP-grasp domain maps to 103-298 (KLLWKGAGLP…YEDLCLKVLD (196 aa)). 129-184 (ERQLGLPIFVKPSTEGSSIGVTKVKQPGELRAAFEEARKYDKVVIAEQFIGGGEYT) contributes to the ATP binding site. The Mg(2+) site is built by Asp-252, Glu-265, and Asn-267.

This sequence belongs to the D-alanine--D-alanine ligase family. Mg(2+) is required as a cofactor. Requires Mn(2+) as cofactor.

Its subcellular location is the cytoplasm. It carries out the reaction 2 D-alanine + ATP = D-alanyl-D-alanine + ADP + phosphate + H(+). It participates in cell wall biogenesis; peptidoglycan biosynthesis. Functionally, cell wall formation. This is D-alanine--D-alanine ligase B from Chromobacterium violaceum (strain ATCC 12472 / DSM 30191 / JCM 1249 / CCUG 213 / NBRC 12614 / NCIMB 9131 / NCTC 9757 / MK).